We begin with the raw amino-acid sequence, 466 residues long: Phosphomethylpyrimidine synthase (466 aa).

Residues N80, M109, Y139, H175, 195-197 (SRG), 236-239 (DSLR), and E275 contribute to the substrate site. Position 279 (H279) interacts with Zn(2+). Substrate is bound at residue Y302. H343 is a Zn(2+) binding site. 3 residues coordinate [4Fe-4S] cluster: C423, C426, and C431.

This sequence belongs to the ThiC family. [4Fe-4S] cluster is required as a cofactor.

The enzyme catalyses 5-amino-1-(5-phospho-beta-D-ribosyl)imidazole + S-adenosyl-L-methionine = 4-amino-2-methyl-5-(phosphooxymethyl)pyrimidine + CO + 5'-deoxyadenosine + formate + L-methionine + 3 H(+). Its pathway is cofactor biosynthesis; thiamine diphosphate biosynthesis. Functionally, catalyzes the synthesis of the hydroxymethylpyrimidine phosphate (HMP-P) moiety of thiamine from aminoimidazole ribotide (AIR) in a radical S-adenosyl-L-methionine (SAM)-dependent reaction. In Synechococcus sp. (strain RCC307), this protein is Phosphomethylpyrimidine synthase.